The primary structure comprises 208 residues: Ribosomal RNA large subunit methyltransferase E (208 aa).

S-adenosyl-L-methionine is bound by residues glycine 63, tryptophan 65, aspartate 83, aspartate 99, and aspartate 124. Lysine 164 serves as the catalytic Proton acceptor.

This sequence belongs to the class I-like SAM-binding methyltransferase superfamily. RNA methyltransferase RlmE family.

The protein resides in the cytoplasm. It catalyses the reaction uridine(2552) in 23S rRNA + S-adenosyl-L-methionine = 2'-O-methyluridine(2552) in 23S rRNA + S-adenosyl-L-homocysteine + H(+). Specifically methylates the uridine in position 2552 of 23S rRNA at the 2'-O position of the ribose in the fully assembled 50S ribosomal subunit. The sequence is that of Ribosomal RNA large subunit methyltransferase E from Hamiltonella defensa subsp. Acyrthosiphon pisum (strain 5AT).